A 262-amino-acid polypeptide reads, in one-letter code: Plant intracellular Ras-group-related LRR protein 7 (262 aa).

LRR repeat units follow at residues 19–42 (WRST…VLQV), 43–66 (GNSL…VGTL), 68–89 (NMQR…IGYL), 90–112 (RNLK…LGSL), 113–135 (SNLQ…VGDL), 137–158 (NMLL…IGGC), 159–181 (SSLE…ICNL), 182–204 (VCLK…LLKD), and 206–231 (KALQ…GFTE).

This sequence belongs to the SHOC2 family. Widely expressed and preferentially in leaf sheathes.

Leucine-rich repeat protein that likely mediates protein interactions, possibly in the context of signal transduction. This chain is Plant intracellular Ras-group-related LRR protein 7 (IRL7), found in Oryza sativa subsp. japonica (Rice).